The sequence spans 485 residues: GTPase Obg (485 aa).

Residues 1-159 enclose the Obg domain; the sequence is MKFVDEVRIF…LTLRLELKLL (159 aa). Residues 160–332 enclose the OBG-type G domain; the sequence is ADVGLLGFPN…LMDSVAEVLF (173 aa). Residues 166–173, 191–195, 213–216, 284–287, and 313–315 each bind GTP; these read GFPNAGKS, FTTLV, DIPG, NKLD, and SCA. Mg(2+) contacts are provided by S173 and T193. Composition is skewed to low complexity over residues 367–385, 394–428, 437–446, and 455–474; these read AGAA…AAKK, RKAG…PVKK, RKSGTAPAKK, and RKSG…ATKR. Residues 367–485 are disordered; the sequence is AGAAAATKSA…PARKSGGGRS (119 aa).

Belongs to the TRAFAC class OBG-HflX-like GTPase superfamily. OBG GTPase family. In terms of assembly, monomer. Mg(2+) serves as cofactor.

It is found in the cytoplasm. An essential GTPase which binds GTP, GDP and possibly (p)ppGpp with moderate affinity, with high nucleotide exchange rates and a fairly low GTP hydrolysis rate. Plays a role in control of the cell cycle, stress response, ribosome biogenesis and in those bacteria that undergo differentiation, in morphogenesis control. This is GTPase Obg from Myxococcus xanthus (strain DK1622).